Here is a 383-residue protein sequence, read N- to C-terminus: Prokineticin receptor 2 (383 aa).

The Extracellular portion of the chain corresponds to Met-1–Ile-54. Residues Asn-7 and Asn-27 are each glycosylated (N-linked (GlcNAc...) asparagine). The helical transmembrane segment at Val-55 to Ile-75 threads the bilayer. The Cytoplasmic segment spans residues Ala-76–Asn-89. A helical transmembrane segment spans residues Leu-90–Glu-110. Topologically, residues Met-111 to Thr-136 are extracellular. A disulfide bridge connects residues Cys-128 and Cys-207. A helical transmembrane segment spans residues Val-137–Ile-157. The Cytoplasmic segment spans residues Val-158–Ser-170. The helical transmembrane segment at Phe-171–Thr-191 threads the bilayer. The Extracellular portion of the chain corresponds to Thr-192 to Tyr-222. Residues Phe-223–Ala-243 form a helical membrane-spanning segment. Over Arg-244–Thr-272 the chain is Cytoplasmic. A helical membrane pass occupies residues Val-273 to Phe-293. The Extracellular portion of the chain corresponds to Thr-294–Thr-312. Residues Ala-313 to Val-333 form a helical membrane-spanning segment. Residues Thr-334–Lys-383 are Cytoplasmic-facing.

Belongs to the G-protein coupled receptor 1 family. As to quaternary structure, homodimer. In terms of tissue distribution, abundantly expressed in the CNS and reproductive organs with the highest levels in the cerebrum, cerebellum, testis and ovary.

Its subcellular location is the cell membrane. Functionally, receptor for prokineticin 2. Exclusively coupled to the G(q) subclass of heteromeric G proteins. Activation leads to mobilization of calcium, stimulation of phosphoinositide turnover and activation of p44/p42 mitogen-activated protein kinase. This chain is Prokineticin receptor 2 (Prokr2), found in Rattus norvegicus (Rat).